The sequence spans 59 residues: Ribosome biogenesis protein Nop10 (59 aa).

The protein belongs to the NOP10 family.

Functionally, involved in ribosome biogenesis; more specifically in 18S rRNA pseudouridylation and in cleavage of pre-rRNA. This is Ribosome biogenesis protein Nop10 from Thermococcus gammatolerans (strain DSM 15229 / JCM 11827 / EJ3).